A 265-amino-acid chain; its full sequence is tRNA pseudouridine synthase A (265 aa).

D58 (nucleophile) is an active-site residue. Y116 serves as a coordination point for substrate.

The protein belongs to the tRNA pseudouridine synthase TruA family. In terms of assembly, homodimer.

The enzyme catalyses uridine(38/39/40) in tRNA = pseudouridine(38/39/40) in tRNA. Its function is as follows. Formation of pseudouridine at positions 38, 39 and 40 in the anticodon stem and loop of transfer RNAs. The protein is tRNA pseudouridine synthase A of Neisseria meningitidis serogroup B (strain ATCC BAA-335 / MC58).